The following is a 368-amino-acid chain: UDP-N-acetylglucosamine--N-acetylmuramyl-(pentapeptide) pyrophosphoryl-undecaprenol N-acetylglucosamine transferase (368 aa).

Residues 10–12 (TGG), Asn128, Arg170, Ser199, Ile250, and Gln295 contribute to the UDP-N-acetyl-alpha-D-glucosamine site.

This sequence belongs to the glycosyltransferase 28 family. MurG subfamily.

The protein localises to the cell inner membrane. The catalysed reaction is di-trans,octa-cis-undecaprenyl diphospho-N-acetyl-alpha-D-muramoyl-L-alanyl-D-glutamyl-meso-2,6-diaminopimeloyl-D-alanyl-D-alanine + UDP-N-acetyl-alpha-D-glucosamine = di-trans,octa-cis-undecaprenyl diphospho-[N-acetyl-alpha-D-glucosaminyl-(1-&gt;4)]-N-acetyl-alpha-D-muramoyl-L-alanyl-D-glutamyl-meso-2,6-diaminopimeloyl-D-alanyl-D-alanine + UDP + H(+). It participates in cell wall biogenesis; peptidoglycan biosynthesis. Functionally, cell wall formation. Catalyzes the transfer of a GlcNAc subunit on undecaprenyl-pyrophosphoryl-MurNAc-pentapeptide (lipid intermediate I) to form undecaprenyl-pyrophosphoryl-MurNAc-(pentapeptide)GlcNAc (lipid intermediate II). This chain is UDP-N-acetylglucosamine--N-acetylmuramyl-(pentapeptide) pyrophosphoryl-undecaprenol N-acetylglucosamine transferase, found in Chlorobium phaeovibrioides (strain DSM 265 / 1930) (Prosthecochloris vibrioformis (strain DSM 265)).